The sequence spans 236 residues: UPF0173 metal-dependent hydrolase DSY1309 (236 aa).

This sequence belongs to the UPF0173 family.

This chain is UPF0173 metal-dependent hydrolase DSY1309, found in Desulfitobacterium hafniense (strain Y51).